Consider the following 316-residue polypeptide: Beta-ketoacyl-[acyl-carrier-protein] synthase III (316 aa).

Residues C112 and H243 contribute to the active site. The interval 244 to 248 is ACP-binding; that stretch reads QANLR. Residue N273 is part of the active site.

Belongs to the thiolase-like superfamily. FabH family. In terms of assembly, homodimer.

The protein localises to the cytoplasm. It catalyses the reaction malonyl-[ACP] + acetyl-CoA + H(+) = 3-oxobutanoyl-[ACP] + CO2 + CoA. It functions in the pathway lipid metabolism; fatty acid biosynthesis. Catalyzes the condensation reaction of fatty acid synthesis by the addition to an acyl acceptor of two carbons from malonyl-ACP. Catalyzes the first condensation reaction which initiates fatty acid synthesis and may therefore play a role in governing the total rate of fatty acid production. Possesses both acetoacetyl-ACP synthase and acetyl transacylase activities. Its substrate specificity determines the biosynthesis of branched-chain and/or straight-chain of fatty acids. This Haemophilus influenzae (strain 86-028NP) protein is Beta-ketoacyl-[acyl-carrier-protein] synthase III.